A 173-amino-acid chain; its full sequence is Zinc finger A20 and AN1 domain-containing stress-associated protein 2 (173 aa).

An A20-type zinc finger spans residues proline 12–glutamate 46. The Zn(2+) site is built by cysteine 18, cysteine 22, cysteine 34, cysteine 37, cysteine 114, cysteine 117, cysteine 128, cysteine 130, cysteine 135, histidine 138, histidine 144, and cysteine 146. An AN1-type zinc finger spans residues proline 108–alanine 154.

In terms of biological role, may be involved in environmental stress response. In Arabidopsis thaliana (Mouse-ear cress), this protein is Zinc finger A20 and AN1 domain-containing stress-associated protein 2 (SAP2).